A 694-amino-acid polypeptide reads, in one-letter code: Elongation factor G (694 aa).

Residues 9-288 (DAIRNIGIMA…VIVKWLPSPL (280 aa)) form the tr-type G domain. GTP contacts are provided by residues 18–25 (AHIDAGKT), 82–86 (DTPGH), and 136–139 (NKMD).

It belongs to the TRAFAC class translation factor GTPase superfamily. Classic translation factor GTPase family. EF-G/EF-2 subfamily.

It is found in the cytoplasm. In terms of biological role, catalyzes the GTP-dependent ribosomal translocation step during translation elongation. During this step, the ribosome changes from the pre-translocational (PRE) to the post-translocational (POST) state as the newly formed A-site-bound peptidyl-tRNA and P-site-bound deacylated tRNA move to the P and E sites, respectively. Catalyzes the coordinated movement of the two tRNA molecules, the mRNA and conformational changes in the ribosome. The chain is Elongation factor G (fusA) from Chlamydia muridarum (strain MoPn / Nigg).